The primary structure comprises 67 residues: uncharacterized protein (67 aa).

2 helical membrane-spanning segments follow: residues 10–32 and 44–66; these read NLSH…TAFI and ATLT…MGQW.

The protein localises to the cell membrane. This is an uncharacterized protein from Archaeoglobus fulgidus (strain ATCC 49558 / DSM 4304 / JCM 9628 / NBRC 100126 / VC-16).